The following is a 349-amino-acid chain: ATP synthase subunit a-2 (349 aa).

Residues 1–97 constitute a propeptide that is removed on maturation; sequence MERLTRLNHF…SNYMKLMEIP (97 aa). The next 7 membrane-spanning stretches (helical) occupy residues 118–138, 184–204, 213–233, 240–260, 280–300, 303–323, and 326–346; these read FSFT…LLLI, FFPC…QGMI, HFLI…IVGF, FFSF…LVLL, MMAG…MLCM, IFYF…TGLE, and VAIL…NDAI.

It belongs to the ATPase A chain family. F-type ATPases have 2 components, CF(1) - the catalytic core - and CF(0) - the membrane proton channel. CF(1) has five subunits: alpha(3), beta(3), gamma(1), delta(1), epsilon(1). CF(0) has three main subunits: a, b and c.

The protein localises to the mitochondrion inner membrane. Functionally, mitochondrial membrane ATP synthase (F(1)F(0) ATP synthase or Complex V) produces ATP from ADP in the presence of a proton gradient across the membrane which is generated by electron transport complexes of the respiratory chain. F-type ATPases consist of two structural domains, F(1) - containing the extramembraneous catalytic core and F(0) - containing the membrane proton channel, linked together by a central stalk and a peripheral stalk. During catalysis, ATP synthesis in the catalytic domain of F(1) is coupled via a rotary mechanism of the central stalk subunits to proton translocation. Key component of the proton channel; it may play a direct role in the translocation of protons across the membrane. The chain is ATP synthase subunit a-2 (ATP6-2) from Arabidopsis thaliana (Mouse-ear cress).